Reading from the N-terminus, the 408-residue chain is Lysosomal phospholipase A and acyltransferase (408 aa).

An N-terminal signal peptide occupies residues 1–31; that stretch reads MGLRRGPCPAALLPGGFLFLLLLADPALLAG. D42 provides a ligand contact to substrate. An intrachain disulfide couples C61 to C85. The N-linked (GlcNAc...) asparagine glycan is linked to N95. The active-site Acyl-ester intermediate is S194. S194 provides a ligand contact to Zn(2+). M195 lines the substrate pocket. Residues N269 and N285 are each glycosylated (N-linked (GlcNAc...) asparagine). Residues D336 and C351 each contribute to the Zn(2+) site. Residues D356 and H388 each act as charge relay system in the active site. Position 388 (H388) interacts with Zn(2+). N394 carries an N-linked (GlcNAc...) asparagine glycan.

This sequence belongs to the AB hydrolase superfamily. Lipase family. Post-translationally, N-glycosylated. N-glycosylation is important for maturation of the enzyme and normal subcellular location.

It is found in the secreted. Its subcellular location is the lysosome. The protein resides in the membrane. The enzyme catalyses a 1,2-diacyl-sn-glycero-3-phosphocholine + H2O = a 2-acyl-sn-glycero-3-phosphocholine + a fatty acid + H(+). It carries out the reaction 1-hexadecanoyl-2-(9Z-octadecenoyl)-sn-glycero-3-phosphocholine + H2O = 2-(9Z-octadecenoyl)-sn-glycero-3-phosphocholine + hexadecanoate + H(+). The catalysed reaction is 1,2-di-(9Z-octadecenoyl)-sn-glycero-3-phosphocholine + H2O = 2-(9Z-octadecenoyl)-sn-glycero-3-phosphocholine + (9Z)-octadecenoate + H(+). It catalyses the reaction 1-hexadecanoyl-2-glutaroyl-sn-glycero-3-phosphocholine + H2O = 2-glutaroyl-sn-glycero-3-phosphocholine + hexadecanoate + H(+). The enzyme catalyses 1-hexadecanoyl-2-nonadioyl-sn-glycero-3-phosphocholine + H2O = 2-nonadioyl-sn-glycero-3-phosphocholine + hexadecanoate + H(+). It carries out the reaction 1-hexadecanoyl-2-(5-oxopentanoyl)-sn-glycero-3-phosphocholine + H2O = 2-(5-oxopentanoyl)-sn-glycero-3-phosphocholine + hexadecanoate + H(+). The catalysed reaction is 1-hexadecanoyl-2-(9-oxononanoyl)-sn-glycero-3-phosphocholine + H2O = 2-(9-oxononanoyl)-sn-glycero-3-phosphocholine + hexadecanoate + H(+). It catalyses the reaction 1,2-dihexadecanoyl-sn-glycero-3-phosphocholine + H2O = 2-hexadecanoyl-sn-glycero-3-phosphocholine + hexadecanoate + H(+). The enzyme catalyses a 1,2-diacyl-sn-glycero-3-phosphocholine + H2O = a 1-acyl-sn-glycero-3-phosphocholine + a fatty acid + H(+). It carries out the reaction 1-hexadecanoyl-2-(9Z-octadecenoyl)-sn-glycero-3-phosphocholine + H2O = 1-hexadecanoyl-sn-glycero-3-phosphocholine + (9Z)-octadecenoate + H(+). The catalysed reaction is 1,2-di-(9Z-octadecenoyl)-sn-glycero-3-phosphocholine + H2O = 1-(9Z-octadecenoyl)-sn-glycero-3-phosphocholine + (9Z)-octadecenoate + H(+). It catalyses the reaction 1,2-dihexadecanoyl-sn-glycero-3-phosphocholine + H2O = 1-hexadecanoyl-sn-glycero-3-phosphocholine + hexadecanoate + H(+). The enzyme catalyses a 1-acyl-sn-glycero-3-phosphocholine + H2O = sn-glycerol 3-phosphocholine + a fatty acid + H(+). It carries out the reaction 1-hexadecanoyl-sn-glycero-3-phosphocholine + H2O = sn-glycerol 3-phosphocholine + hexadecanoate + H(+). The catalysed reaction is N-(acetyl)-sphing-4-enine + a 1,2-diacyl-sn-glycero-3-phosphoethanolamine = 1-O-acyl-N-(acetyl)-sphing-4-enine + a 2-acyl-sn-glycero-3-phosphoethanolamine. It catalyses the reaction 1-hexadecanoyl-2-(9Z-octadecenoyl)-sn-glycero-3-phosphoethanolamine + N-(acetyl)-sphing-4-enine = 2-(9Z-octadecenoyl)-sn-glycero-3-phosphoethanolamine + 1-hexadecanoyl-N-(acetyl)-sphing-4-enine. The enzyme catalyses 1-hexadecanoyl-2-(9Z,12Z-octadecadienoyl)-sn-glycero-3-phosphoethanolamine + N-(acetyl)-sphing-4-enine = 2-(9Z,12Z)-octadecadienoyl-sn-glycero-3-phosphoethanolamine + 1-hexadecanoyl-N-(acetyl)-sphing-4-enine. It carries out the reaction 1-hexadecanoyl-2-(5Z,8Z,11Z,14Z-eicosatetraenoyl)-sn-glycero-3-phosphoethanolamine + N-(acetyl)-sphing-4-enine = 2-(5Z,8Z,11Z,14Z)-eicosatetraenoyl-sn-glycero-3-phosphoethanolamine + 1-hexadecanoyl-N-(acetyl)-sphing-4-enine. The catalysed reaction is N-(acetyl)-sphing-4-enine + a 1,2-diacyl-sn-glycero-3-phosphoethanolamine = 1-O-acyl-N-(acetyl)-sphing-4-enine + a 1-acyl-sn-glycero-3-phosphoethanolamine. It catalyses the reaction 1-hexadecanoyl-2-(9Z-octadecenoyl)-sn-glycero-3-phosphoethanolamine + N-(acetyl)-sphing-4-enine = 1-(9Z-octadecenoyl)-N-(acetyl)-sphing-4-enine + 1-hexadecanoyl-sn-glycero-3-phosphoethanolamine. The enzyme catalyses 1-hexadecanoyl-2-(9Z,12Z-octadecadienoyl)-sn-glycero-3-phosphoethanolamine + N-(acetyl)-sphing-4-enine = 1-(9Z,12Z-octadecadienoyl)-N-acetylsphing-4-enine + 1-hexadecanoyl-sn-glycero-3-phosphoethanolamine. It carries out the reaction 1-hexadecanoyl-2-(5Z,8Z,11Z,14Z-eicosatetraenoyl)-sn-glycero-3-phosphoethanolamine + N-(acetyl)-sphing-4-enine = 1-(5Z,8Z,11Z,14Z)-eicosatetraenoyl-N-(acetyl)-sphing-4-enine + 1-hexadecanoyl-sn-glycero-3-phosphoethanolamine. The catalysed reaction is N-(acetyl)-sphing-4-enine + a 1,2-diacyl-sn-glycero-3-phosphocholine = 1-O-acyl-N-(acetyl)-sphing-4-enine + a 2-acyl-sn-glycero-3-phosphocholine. It catalyses the reaction 1-hexadecanoyl-2-(9Z-octadecenoyl)-sn-glycero-3-phosphocholine + N-(acetyl)-sphing-4-enine = 1-hexadecanoyl-N-(acetyl)-sphing-4-enine + 2-(9Z-octadecenoyl)-sn-glycero-3-phosphocholine. The enzyme catalyses 1-hexadecanoyl-2-(9Z,12Z-octadecadienoyl)-sn-glycero-3-phosphocholine + N-(acetyl)-sphing-4-enine = 2-(9Z,12Z-octadecadienoyl)-sn-glycero-3-phosphocholine + 1-hexadecanoyl-N-(acetyl)-sphing-4-enine. It carries out the reaction 1-hexadecanoyl-2-(5Z,8Z,11Z,14Z-eicosatetraenoyl)-sn-glycero-3-phosphocholine + N-(acetyl)-sphing-4-enine = 1-hexadecanoyl-N-(acetyl)-sphing-4-enine + 2-(5Z,8Z,11Z,14Z)-eicosatetraenoyl-sn-glycero-3-phosphocholine. The catalysed reaction is 1-hexadecanoyl-2-(4Z,7Z,10Z,13Z,16Z,19Z-docosahexaenoyl)-sn-glycero-3-phosphocholine + N-(acetyl)-sphing-4-enine = 2-(4Z,7Z,10Z,13Z,16Z,19Z-docosahexaenoyl)-sn-glycero-3-phosphocholine + 1-hexadecanoyl-N-(acetyl)-sphing-4-enine. It catalyses the reaction 1-hexadecanoyl-2-nonadioyl-sn-glycero-3-phosphocholine + N-(acetyl)-sphing-4-enine = 2-nonadioyl-sn-glycero-3-phosphocholine + 1-hexadecanoyl-N-(acetyl)-sphing-4-enine. The enzyme catalyses 1-octadecanoyl-2-(9Z-octadecenoyl)-sn-glycero-3-phosphocholine + N-(acetyl)-sphing-4-enine = 1-octadecanoyl-N-(acetyl)-sphing-4-enine + 2-(9Z-octadecenoyl)-sn-glycero-3-phosphocholine. It carries out the reaction 1-(9Z)-octadecenoyl-2-octadecanoyl-sn-glycero-3-phosphocholine + N-(acetyl)-sphing-4-enine = 2-octadecanoyl-sn-glycero-3-phosphocholine + 1-(9Z-octadecenoyl)-N-(acetyl)-sphing-4-enine. The catalysed reaction is 1-octadecanoyl-2-(5Z,8Z,11Z,14Z-eicosatetraenoyl)-sn-glycero-3-phosphocholine + N-(acetyl)-sphing-4-enine = 1-octadecanoyl-N-(acetyl)-sphing-4-enine + 2-(5Z,8Z,11Z,14Z)-eicosatetraenoyl-sn-glycero-3-phosphocholine. It catalyses the reaction 1-(9Z-octadecenoyl)-2-hexadecanoyl-sn-glycero-3-phosphocholine + N-(acetyl)-sphing-4-enine = 1-(9Z-octadecenoyl)-N-(acetyl)-sphing-4-enine + 2-hexadecanoyl-sn-glycero-3-phosphocholine. The enzyme catalyses N-(acetyl)-sphing-4-enine + a 1,2-diacyl-sn-glycero-3-phosphocholine = 1-O-acyl-N-(acetyl)-sphing-4-enine + a 1-acyl-sn-glycero-3-phosphocholine. It carries out the reaction 1-hexadecanoyl-2-(9Z-octadecenoyl)-sn-glycero-3-phosphocholine + N-(acetyl)-sphing-4-enine = 1-(9Z-octadecenoyl)-N-(acetyl)-sphing-4-enine + 1-hexadecanoyl-sn-glycero-3-phosphocholine. The catalysed reaction is 1-hexadecanoyl-2-(9Z,12Z-octadecadienoyl)-sn-glycero-3-phosphocholine + N-(acetyl)-sphing-4-enine = 1-(9Z,12Z-octadecadienoyl)-N-acetylsphing-4-enine + 1-hexadecanoyl-sn-glycero-3-phosphocholine. It catalyses the reaction 1-hexadecanoyl-2-(5Z,8Z,11Z,14Z-eicosatetraenoyl)-sn-glycero-3-phosphocholine + N-(acetyl)-sphing-4-enine = 1-(5Z,8Z,11Z,14Z)-eicosatetraenoyl-N-(acetyl)-sphing-4-enine + 1-hexadecanoyl-sn-glycero-3-phosphocholine. The enzyme catalyses 1-hexadecanoyl-2-(4Z,7Z,10Z,13Z,16Z,19Z-docosahexaenoyl)-sn-glycero-3-phosphocholine + N-(acetyl)-sphing-4-enine = 1-(4Z,7Z,10Z,13Z,16Z,19Z-docosahexaenoyl)-N-(acetyl)-sphing-4-enine + 1-hexadecanoyl-sn-glycero-3-phosphocholine. It carries out the reaction 1-octadecanoyl-2-(9Z-octadecenoyl)-sn-glycero-3-phosphocholine + N-(acetyl)-sphing-4-enine = 1-(9Z-octadecenoyl)-N-(acetyl)-sphing-4-enine + 1-octadecanoyl-sn-glycero-3-phosphocholine. The catalysed reaction is 1-octadecanoyl-2-(9Z,12Z)-octadecadienoyl-sn-glycero-3-phosphocholine + N-(acetyl)-sphing-4-enine = 1-(9Z,12Z-octadecadienoyl)-N-acetylsphing-4-enine + 1-octadecanoyl-sn-glycero-3-phosphocholine. It catalyses the reaction 1-(9Z-octadecenoyl)-2-hexadecanoyl-sn-glycero-3-phosphocholine + N-(acetyl)-sphing-4-enine = 1-hexadecanoyl-N-(acetyl)-sphing-4-enine + 1-(9Z-octadecenoyl)-sn-glycero-3-phosphocholine. The enzyme catalyses 1-(9Z)-octadecenoyl-2-octadecanoyl-sn-glycero-3-phosphocholine + N-(acetyl)-sphing-4-enine = 1-octadecanoyl-N-(acetyl)-sphing-4-enine + 1-(9Z-octadecenoyl)-sn-glycero-3-phosphocholine. It carries out the reaction 1,2-di-(9Z-octadecenoyl)-sn-glycero-3-phosphocholine + N-(acetyl)-sphing-4-enine = 1-(9Z-octadecenoyl)-N-(acetyl)-sphing-4-enine + 1-(9Z-octadecenoyl)-sn-glycero-3-phosphocholine. The catalysed reaction is 1-octadecanoyl-2-(5Z,8Z,11Z,14Z-eicosatetraenoyl)-sn-glycero-3-phosphocholine + N-(acetyl)-sphing-4-enine = 1-(5Z,8Z,11Z,14Z)-eicosatetraenoyl-N-(acetyl)-sphing-4-enine + 1-octadecanoyl-sn-glycero-3-phosphocholine. It catalyses the reaction a 1,2-diacyl-sn-glycero-3-phospho-L-serine + N-(acetyl)-sphing-4-enine = a 2-acyl-sn-glycero-3-phospho-L-serine + 1-O-acyl-N-(acetyl)-sphing-4-enine. The enzyme catalyses 1-octadecanoyl-2-(9Z-octadecenoyl)-sn-glycero-3-phospho-L-serine + N-(acetyl)-sphing-4-enine = 2-(9Z-octadecenoyl)-sn-glycero-3-phospho-L-serine + 1-octadecanoyl-N-(acetyl)-sphing-4-enine. It carries out the reaction a 1,2-diacyl-sn-glycero-3-phospho-L-serine + N-(acetyl)-sphing-4-enine = 1-O-acyl-N-(acetyl)-sphing-4-enine + a 1-acyl-sn-glycero-3-phospho-L-serine. The catalysed reaction is 1-octadecanoyl-2-(9Z-octadecenoyl)-sn-glycero-3-phospho-L-serine + N-(acetyl)-sphing-4-enine = 1-octadecanoyl-sn-glycero-3-phosphoserine + 1-(9Z-octadecenoyl)-N-(acetyl)-sphing-4-enine. It catalyses the reaction a 1,2-diacyl-sn-glycero-3-phospho-(1'-sn-glycerol) + N-(acetyl)-sphing-4-enine = 2-acyl-sn-glycero-3-phospho-(1'-sn-glycerol) + 1-O-acyl-N-(acetyl)-sphing-4-enine. The enzyme catalyses 1-octadecanoyl-2-(9Z-octadecenoyl)-sn-glycero-3-phospho-(1'-sn-glycerol) + N-(acetyl)-sphing-4-enine = 2-(9Z-octadecenoyl)-sn-glycero-3-phospho-(1'-sn-glycerol) + 1-octadecanoyl-N-(acetyl)-sphing-4-enine. It carries out the reaction a 1,2-diacyl-sn-glycero-3-phospho-(1'-sn-glycerol) + N-(acetyl)-sphing-4-enine = 1-O-acyl-N-(acetyl)-sphing-4-enine + 1-acyl-sn-glycero-3-phospho-(1'-sn-glycerol). The catalysed reaction is 1-octadecanoyl-2-(9Z-octadecenoyl)-sn-glycero-3-phospho-(1'-sn-glycerol) + N-(acetyl)-sphing-4-enine = 1-octadecanoyl-sn-glycero-3-phospho-(1'-sn-glycerol) + 1-(9Z-octadecenoyl)-N-(acetyl)-sphing-4-enine. It catalyses the reaction an N-acylethanolamine + a 1,2-diacyl-sn-glycero-3-phosphocholine = 2-(acylamino)ethyl fatty acid + a 2-acyl-sn-glycero-3-phosphocholine. The enzyme catalyses an N-acylethanolamine + a 1,2-diacyl-sn-glycero-3-phosphocholine = 2-(acylamino)ethyl fatty acid + a 1-acyl-sn-glycero-3-phosphocholine. It carries out the reaction N-(5Z,8Z,11Z,14Z-eicosatetraenoyl)-ethanolamine + 1,2-di-(9Z-octadecenoyl)-sn-glycero-3-phosphocholine = 2-[(5Z,8Z,11Z,14Z)-eicosatetraenoylamino]ethyl (9Z)-octadecenoate + (9Z-octadecenoyl)-sn-glycero-3-phosphocholine. The catalysed reaction is N-(9Z-octadecenoyl) ethanolamine + 1,2-di-(9Z-octadecenoyl)-sn-glycero-3-phosphocholine = 2-[(9Z)-octadecenoylamino]ethyl (9Z)-octadecenoate + (9Z-octadecenoyl)-sn-glycero-3-phosphocholine. It catalyses the reaction a 3-acyl-sn-glycerol + a 1,2-diacyl-sn-glycero-3-phosphocholine = a 1,3-diacylglycerol + a 1-acyl-sn-glycero-3-phosphocholine. The enzyme catalyses a 3-acyl-sn-glycerol + a 1,2-diacyl-sn-glycero-3-phosphocholine = a 1,3-diacylglycerol + a 2-acyl-sn-glycero-3-phosphocholine. It carries out the reaction 3-(9Z-octadecenoyl)-sn-glycerol + 1,2-di-(9Z-octadecenoyl)-sn-glycero-3-phosphocholine = 1,3-di-(9Z-octadecenoyl)-glycerol + (9Z-octadecenoyl)-sn-glycero-3-phosphocholine. The catalysed reaction is 3-hexadecanoyl-sn-glycerol + 1,2-di-(9Z-octadecenoyl)-sn-glycero-3-phosphocholine = 1-(9Z)-octadecenoyl-3-hexadecanoyl-sn-glycerol + (9Z-octadecenoyl)-sn-glycero-3-phosphocholine. It catalyses the reaction a 1-acyl-sn-glycerol + a 1,2-diacyl-sn-glycero-3-phosphocholine = a 1,3-diacylglycerol + a 2-acyl-sn-glycero-3-phosphocholine. The enzyme catalyses a 1-acyl-sn-glycerol + a 1,2-diacyl-sn-glycero-3-phosphocholine = a 1,3-diacylglycerol + a 1-acyl-sn-glycero-3-phosphocholine. It carries out the reaction 1-(9Z-octadecenoyl)-sn-glycerol + 1,2-di-(9Z-octadecenoyl)-sn-glycero-3-phosphocholine = 1,3-di-(9Z-octadecenoyl)-glycerol + (9Z-octadecenoyl)-sn-glycero-3-phosphocholine. The catalysed reaction is 1-hexadecanoyl-sn-glycerol + 1,2-di-(9Z-octadecenoyl)-sn-glycero-3-phosphocholine = 1-hexadecanoyl-3-(9Z)-octadecenoyl-sn-glycerol + (9Z-octadecenoyl)-sn-glycero-3-phosphocholine. It catalyses the reaction a 2-acylglycerol + a 1,2-diacyl-sn-glycero-3-phosphocholine = a 1,2-diacylglycerol + a 2-acyl-sn-glycero-3-phosphocholine. The enzyme catalyses a 2-acylglycerol + a 1,2-diacyl-sn-glycero-3-phosphocholine = a 1,2-diacylglycerol + a 1-acyl-sn-glycero-3-phosphocholine. It carries out the reaction 2-hexadecanoylglycerol + 1,2-di-(9Z-octadecenoyl)-sn-glycero-3-phosphocholine = 1-(9Z)-octadecenoyl-2-hexadecanoylglycerol + (9Z-octadecenoyl)-sn-glycero-3-phosphocholine. The catalysed reaction is 1-O-alkylglycerol + a 1,2-diacyl-sn-glycero-3-phosphocholine = 1-O-alkyl-3-acylglycerol + a 1-acyl-sn-glycero-3-phosphocholine. It catalyses the reaction 1-O-alkylglycerol + a 1,2-diacyl-sn-glycero-3-phosphocholine = 1-O-alkyl-3-acylglycerol + a 2-acyl-sn-glycero-3-phosphocholine. The enzyme catalyses 1-O-hexadecylglycerol + 1,2-di-(9Z-octadecenoyl)-sn-glycero-3-phosphocholine = 1-O-hexadecyl-3-(9Z)-octadecenoylglycerol + (9Z-octadecenoyl)-sn-glycero-3-phosphocholine. It carries out the reaction 1-O-alkyl-2-acyl-sn-glycerol + a 1,2-diacyl-sn-glycero-3-phosphocholine = 1-O-alkyl-2,3-diacyl-sn-glycerol + a 2-acyl-sn-glycero-3-phosphocholine. The catalysed reaction is 1-O-alkyl-2-acyl-sn-glycerol + a 1,2-diacyl-sn-glycero-3-phosphocholine = 1-O-alkyl-2,3-diacyl-sn-glycerol + a 1-acyl-sn-glycero-3-phosphocholine. It catalyses the reaction 1-O-hexadecyl-2-acetyl-sn-glycerol + 1,2-di-(9Z-octadecenoyl)-sn-glycero-3-phosphocholine = 1-O-hexadecyl-2-acetyl-3-(9Z)-octadecenoyl-sn-glycerol + (9Z-octadecenoyl)-sn-glycero-3-phosphocholine. The enzyme catalyses 1-O-hexadecyl-2-O-methyl-sn-glycerol + 1,2-di-(9Z-octadecenoyl)-sn-glycero-3-phosphocholine = 1-O-hexadecyl-2-O-methyl-3-(9Z)-octadecenoyl-sn-glycerol + (9Z-octadecenoyl)-sn-glycero-3-phosphocholine. It carries out the reaction a 1,2-diacyl-sn-glycero-3-phosphoethanolamine + H2O = a 1-acyl-sn-glycero-3-phosphoethanolamine + a fatty acid + H(+). The catalysed reaction is 1-acyl-2-(5Z,8Z,11Z,14Z)-eicosatetraenoyl-sn-glycero-3-phosphoethanolamine + H2O = a 1-acyl-sn-glycero-3-phosphoethanolamine + (5Z,8Z,11Z,14Z)-eicosatetraenoate + H(+). It catalyses the reaction a 1,2-diacyl-sn-glycero-3-phospho-(1'-sn-glycerol) + H2O = 1-acyl-sn-glycero-3-phospho-(1'-sn-glycerol) + a fatty acid + H(+). The enzyme catalyses 1-hexadecanoyl-2-(9Z-octadecenoyl)-sn-glycero-3-phospho-(1'-sn-glycerol) + H2O = 1-hexadecanoyl-sn-glycero-3-phospho-(1'-sn-glycerol) + (9Z)-octadecenoate + H(+). It carries out the reaction a 1,2-diacyl-sn-glycero-3-phospho-(1'-sn-glycerol) + H2O = 2-acyl-sn-glycero-3-phospho-(1'-sn-glycerol) + a fatty acid + H(+). The catalysed reaction is 1-hexadecanoyl-2-(9Z-octadecenoyl)-sn-glycero-3-phospho-(1'-sn-glycerol) + H2O = 2-(9Z-octadecenoyl)-sn-glycero-3-phospho-(1'-sn-glycerol) + hexadecanoate + H(+). Has dual calcium-independent phospholipase and O-acyltransferase activities with a potential role in glycerophospholipid homeostasis and remodeling of acyl groups of lipophilic alcohols present in acidic cellular compartments. Catalyzes hydrolysis of the ester bond of the fatty acyl group attached at sn-1 or sn-2 position of phospholipids (phospholipase A1 or A2 activity) and transfer it to the hydroxyl group at the first carbon of lipophilic alcohols (O-acyltransferase activity). Among preferred fatty acyl donors are phosphatidylcholines, phosphatidylethanolamines, phosphatidylglycerols and phosphatidylserines. Favors sn-2 over sn-1 deacylation of unsaturated fatty acyl groups of phosphatidylcholines, phosphatidylethanolamines, and phosphatidylglycerols. Among preferred fatty acyl acceptors are natural lipophilic alcohols including short-chain ceramide N-acetyl-sphingosine (C2 ceramide), alkylacylglycerols, monoacylglycerols, and acylethanolamides such as anandamide and oleoylethanolamide. Selectively hydrolyzes the sn-1 fatty acyl group of truncated oxidized phospholipids and may play a role in detoxification of reactive oxidized phospholipids during oxidative stress. Required for normal phospholipid degradation in alveolar macrophages with potential implications in the clearance of pulmonary surfactant, which is mainly composed of dipalmitoylphosphatidylcholine (1,2-dihexadecanoyl-sn-glycero-3-phosphocholine). Involved in the first step of bis(monoacylglycero)phosphate (BMP) de novo synthesis from phosphatidylglycerol (1,2-diacyl-sn-glycero-3-phospho-(1'-sn-glycerol), PG). BMP is an important player in cargo sorting and degradation, regulation of cellular cholesterol levels and intercellular communication. At neutral pH, hydrolyzes the sn-1 fatty acyl group of the lysophosphatidylcholines. In Canis lupus familiaris (Dog), this protein is Lysosomal phospholipase A and acyltransferase (PLA2G15).